The primary structure comprises 118 residues: HTH-type transcriptional regulator CmtR (118 aa).

The 95-residue stretch at 3–97 (TCEMRESALA…ELVQVVLAVD (95 aa)) folds into the HTH arsR-type domain. Cysteine 57, cysteine 61, and cysteine 102 together coordinate Cd(2+).

In terms of assembly, homodimer.

In terms of biological role, metal-responsive transcriptional repressor for the cmt operon. Binding of cadmium or lead causes the repressor to dissociate from the DNA. In Mycobacterium bovis (strain ATCC BAA-935 / AF2122/97), this protein is HTH-type transcriptional regulator CmtR (cmtR).